Here is a 494-residue protein sequence, read N- to C-terminus: Flap endonuclease 1 (494 aa).

The tract at residues 1 to 106 is N-domain; the sequence is MGIKGLIPFL…KTLEKRRQQR (106 aa). Asp34 contacts Mg(2+). Residues Arg47 and Arg72 each coordinate DNA. Residues Asp88, Glu160, Glu162, Asp181, and Asp183 each coordinate Mg(2+). Residues 124 to 253 are I-domain; the sequence is SVKKLVGRTV…KTAYSLVKKY (130 aa). Glu160 lines the DNA pocket. The DNA site is built by Gly231 and Asp233. Residue Asp233 coordinates Mg(2+). An interaction with PCNA region spans residues 330-338; it reads IQTSLLSFL. 2 disordered regions span residues 341-382 and 395-426; these read PQHN…ESST and LFCEPSNSDNEEDDRGRVDKNEDLFKKSENET. Residues 408–426 are compositionally biased toward basic and acidic residues; that stretch reads DRGRVDKNEDLFKKSENET.

Belongs to the XPG/RAD2 endonuclease family. FEN1 subfamily. In terms of assembly, interacts with PCNA. Three molecules of FEN1 bind to one PCNA trimer with each molecule binding to one PCNA monomer. PCNA stimulates the nuclease activity without altering cleavage specificity. Requires Mg(2+) as cofactor. Phosphorylated. Phosphorylation upon DNA damage induces relocalization to the nuclear plasma.

It is found in the nucleus. The protein resides in the nucleolus. The protein localises to the nucleoplasm. It localises to the mitochondrion. Structure-specific nuclease with 5'-flap endonuclease and 5'-3' exonuclease activities involved in DNA replication and repair. During DNA replication, cleaves the 5'-overhanging flap structure that is generated by displacement synthesis when DNA polymerase encounters the 5'-end of a downstream Okazaki fragment. It enters the flap from the 5'-end and then tracks to cleave the flap base, leaving a nick for ligation. Also involved in the long patch base excision repair (LP-BER) pathway, by cleaving within the apurinic/apyrimidinic (AP) site-terminated flap. Acts as a genome stabilization factor that prevents flaps from equilibrating into structures that lead to duplications and deletions. Also possesses 5'-3' exonuclease activity on nicked or gapped double-stranded DNA, and exhibits RNase H activity. Also involved in replication and repair of rDNA and in repairing mitochondrial DNA. The protein is Flap endonuclease 1 of Theileria parva (East coast fever infection agent).